The following is a 256-amino-acid chain: Small ribosomal subunit protein eS1 (256 aa).

At alanine 2 the chain carries N-acetylalanine; partial.

Belongs to the eukaryotic ribosomal protein eS1 family. Component of the small ribosomal subunit. Mature ribosomes consist of a small (40S) and a large (60S) subunit. The 40S subunit contains about 33 different proteins and 1 molecule of RNA (18S). The 60S subunit contains about 49 different proteins and 3 molecules of RNA (25S, 5.8S and 5S).

The protein localises to the cytoplasm. The chain is Small ribosomal subunit protein eS1 from Fusarium vanettenii (strain ATCC MYA-4622 / CBS 123669 / FGSC 9596 / NRRL 45880 / 77-13-4) (Fusarium solani subsp. pisi).